The primary structure comprises 784 residues: 5-methyltetrahydropteroyltriglutamate--homocysteine methyltransferase (784 aa).

Residues 16 to 19 and lysine 112 each bind 5-methyltetrahydropteroyltri-L-glutamate; that span reads RELK. Residues 460 to 462 and glutamate 513 contribute to the L-homocysteine site; that span reads IGS. Residues 460 to 462 and glutamate 513 contribute to the L-methionine site; that span reads IGS. Tryptophan 590 contacts 5-methyltetrahydropteroyltri-L-glutamate. An L-homocysteine-binding site is contributed by aspartate 628. Aspartate 628 lines the L-methionine pocket. Glutamate 634 lines the 5-methyltetrahydropteroyltri-L-glutamate pocket. Zn(2+) is bound by residues histidine 670, cysteine 672, and glutamate 694. Histidine 723 functions as the Proton donor in the catalytic mechanism. Cysteine 755 is a Zn(2+) binding site.

This sequence belongs to the vitamin-B12 independent methionine synthase family. It depends on Zn(2+) as a cofactor.

It catalyses the reaction 5-methyltetrahydropteroyltri-L-glutamate + L-homocysteine = tetrahydropteroyltri-L-glutamate + L-methionine. It participates in amino-acid biosynthesis; L-methionine biosynthesis via de novo pathway; L-methionine from L-homocysteine (MetE route): step 1/1. Functionally, catalyzes the transfer of a methyl group from 5-methyltetrahydrofolate to homocysteine resulting in methionine formation. The protein is 5-methyltetrahydropteroyltriglutamate--homocysteine methyltransferase of Acidithiobacillus ferrooxidans (strain ATCC 23270 / DSM 14882 / CIP 104768 / NCIMB 8455) (Ferrobacillus ferrooxidans (strain ATCC 23270)).